The sequence spans 167 residues: Probable chemoreceptor glutamine deamidase CheD (167 aa).

This sequence belongs to the CheD family.

The catalysed reaction is L-glutaminyl-[protein] + H2O = L-glutamyl-[protein] + NH4(+). Functionally, probably deamidates glutamine residues to glutamate on methyl-accepting chemotaxis receptors (MCPs), playing an important role in chemotaxis. This chain is Probable chemoreceptor glutamine deamidase CheD, found in Moorella thermoacetica (strain ATCC 39073 / JCM 9320).